We begin with the raw amino-acid sequence, 229 residues long: V-type proton ATPase subunit E (229 aa).

This sequence belongs to the V-ATPase E subunit family. As to quaternary structure, V-ATPase is a heteromultimeric enzyme composed of a peripheral catalytic V1 complex (components A to H) attached to an integral membrane V0 proton pore complex (components: a, c, c', c'' and d).

Its function is as follows. Subunit of the peripheral V1 complex of vacuolar ATPase essential for assembly or catalytic function. V-ATPase is responsible for acidifying a variety of intracellular compartments in eukaryotic cells. The sequence is that of V-type proton ATPase subunit E (VATE) from Spinacia oleracea (Spinach).